Reading from the N-terminus, the 369-residue chain is 4-hydroxy-3-methylbut-2-en-1-yl diphosphate synthase (flavodoxin) (369 aa).

[4Fe-4S] cluster-binding residues include Cys270, Cys273, Cys305, and Glu312.

It belongs to the IspG family. The cofactor is [4Fe-4S] cluster.

The enzyme catalyses (2E)-4-hydroxy-3-methylbut-2-enyl diphosphate + oxidized [flavodoxin] + H2O + 2 H(+) = 2-C-methyl-D-erythritol 2,4-cyclic diphosphate + reduced [flavodoxin]. It participates in isoprenoid biosynthesis; isopentenyl diphosphate biosynthesis via DXP pathway; isopentenyl diphosphate from 1-deoxy-D-xylulose 5-phosphate: step 5/6. Converts 2C-methyl-D-erythritol 2,4-cyclodiphosphate (ME-2,4cPP) into 1-hydroxy-2-methyl-2-(E)-butenyl 4-diphosphate. The sequence is that of 4-hydroxy-3-methylbut-2-en-1-yl diphosphate synthase (flavodoxin) from Pseudomonas putida (strain ATCC 700007 / DSM 6899 / JCM 31910 / BCRC 17059 / LMG 24140 / F1).